Here is a 1368-residue protein sequence, read N- to C-terminus: DNA-directed RNA polymerase subunit beta (1368 aa).

The protein belongs to the RNA polymerase beta chain family. The RNAP catalytic core consists of 2 alpha, 1 beta, 1 beta' and 1 omega subunit. When a sigma factor is associated with the core the holoenzyme is formed, which can initiate transcription.

The enzyme catalyses RNA(n) + a ribonucleoside 5'-triphosphate = RNA(n+1) + diphosphate. Its function is as follows. DNA-dependent RNA polymerase catalyzes the transcription of DNA into RNA using the four ribonucleoside triphosphates as substrates. This chain is DNA-directed RNA polymerase subunit beta, found in Paraburkholderia xenovorans (strain LB400).